The primary structure comprises 440 residues: Xylose isomerase (440 aa).

Catalysis depends on residues His101 and Asp104. Residues Glu232, Glu268, His271, Asp296, Asp307, Asp309, and Asp339 each contribute to the Mg(2+) site.

Belongs to the xylose isomerase family. Homotetramer. It depends on Mg(2+) as a cofactor.

It is found in the cytoplasm. It carries out the reaction alpha-D-xylose = alpha-D-xylulofuranose. This Escherichia coli (strain SMS-3-5 / SECEC) protein is Xylose isomerase.